Here is a 200-residue protein sequence, read N- to C-terminus: Large ribosomal subunit protein uL4 (200 aa).

Residues 43 to 72 (RAQKTRAEVSGSGKKPWRQKGTGRARSGDI) form a disordered region.

It belongs to the universal ribosomal protein uL4 family. Part of the 50S ribosomal subunit.

One of the primary rRNA binding proteins, this protein initially binds near the 5'-end of the 23S rRNA. It is important during the early stages of 50S assembly. It makes multiple contacts with different domains of the 23S rRNA in the assembled 50S subunit and ribosome. Its function is as follows. Forms part of the polypeptide exit tunnel. The polypeptide is Large ribosomal subunit protein uL4 (Haemophilus ducreyi (strain 35000HP / ATCC 700724)).